The primary structure comprises 123 residues: Small ribosomal subunit protein bS18 (123 aa).

A compositionally biased stretch (polar residues) spans 1 to 10; the sequence is MADETTVSTP. The disordered stretch occupies residues 1 to 52; the sequence is MADETTVSTPAASGTETPSTGGGGAPQGRPQGGPRGDRGPRPGGSGRDGGRK. Positions 20-34 are enriched in gly residues; it reads TGGGGAPQGRPQGGP.

The protein belongs to the bacterial ribosomal protein bS18 family. Part of the 30S ribosomal subunit. Forms a tight heterodimer with protein bS6.

Binds as a heterodimer with protein bS6 to the central domain of the 16S rRNA, where it helps stabilize the platform of the 30S subunit. The protein is Small ribosomal subunit protein bS18 of Koribacter versatilis (strain Ellin345).